The primary structure comprises 134 residues: D-ribose pyranase (134 aa).

Residue H20 is the Proton donor of the active site. Substrate is bound by residues D28, H99, and 123–125 (FSN).

This sequence belongs to the RbsD / FucU family. RbsD subfamily. As to quaternary structure, homodecamer.

It localises to the cytoplasm. It catalyses the reaction beta-D-ribopyranose = beta-D-ribofuranose. It functions in the pathway carbohydrate metabolism; D-ribose degradation; D-ribose 5-phosphate from beta-D-ribopyranose: step 1/2. Its function is as follows. Catalyzes the interconversion of beta-pyran and beta-furan forms of D-ribose. This chain is D-ribose pyranase, found in Staphylococcus carnosus (strain TM300).